The primary structure comprises 286 residues: Probable tRNA(His) guanylyltransferase (286 aa).

Mg(2+) contacts are provided by Asp29, Gly30, and Asp76. Residues 29 to 34 and 75 to 76 contribute to the GTP site; these read DGKKFH and SD.

It belongs to the tRNA(His) guanylyltransferase family. The cofactor is Mg(2+).

The catalysed reaction is a 5'-end ribonucleotide-tRNA(His) + GTP + ATP + H2O = a 5'-end phospho-guanosine-ribonucleotide-tRNA(His) + AMP + 2 diphosphate + H(+). In terms of biological role, adds a GMP to the 5'-end of tRNA(His) after transcription and RNase P cleavage. This Drosophila melanogaster (Fruit fly) protein is Probable tRNA(His) guanylyltransferase.